A 185-amino-acid polypeptide reads, in one-letter code: uncharacterized protein (185 aa).

In terms of domain architecture, N-acetyltransferase spans 9 to 169 (VILELAKESD…NGREDDKPLL (161 aa)).

This is an uncharacterized protein from Bacillus subtilis (strain 168).